A 572-amino-acid polypeptide reads, in one-letter code: MANTPHGGVLKDLLSRDQPIRGELLKESETLASILLSERQLCDLELILSGGFSPLEGFMNEKDYNGVVNDLRLADGALFSMPITLDVSQEDIDELKLKAGGRYTLRDFRDDSPLAIITVDDIYRPDKAVEAKKVFRGDPEHPAVKYLYNTAKEFYVGGKIQAINKLNHYDYVGLRYTPAELRQEFGKLGWNKVVAFQTRNPMHRAHRELTVRAARSRQANVLIHPVVGLTKPGDIDHFTRVRVYQALLPRYPNGMALLGLLPLAMRMGGDREAMWHAIIRKNYGATHFIVGRDHAGPGKNSKGEEFYGPYDAQKLVEKYKDELGIEVVPFQMMTYLPDSDEYMPKDEVPEGTKTLDISGTELRKRLKFGLPIPEWFSYPEVVKVLRESHPPRAKQGFTIFLTGHYNSGKDAIARALQVSLNQQAGRTTTLLLGETVRSELSAELGFSREDRHKNVQRIAFVAAELTRAGSAVIAAPIAPHEAGRKEARETVEQGGNFFLVHVNTPLEYCEATDRKGRFAAAKRGEIKGFTGVDDEYEVPSNADLVVDASQTQVRTIVHQIILLLESQGFFGN.

Residues 1–169 form an N-terminal region; sequence MANTPHGGVL…IQAINKLNHY (169 aa). The interval 170-394 is catalytic; it reads DYVGLRYTPA…LRESHPPRAK (225 aa). Gln197 lines the sulfate pocket. ATP is bound by residues 197-200 and 291-294; these read QTRN and GRDH. Active-site residues include Thr198, Arg199, and Asn200. Sulfate is bound at residue Arg199. Residue Ala295 coordinates sulfate. Met333 contacts ATP. Residues 395-572 are allosteric regulation domain; adenylyl-sulfate kinase-like; it reads QGFTIFLTGH…LLESQGFFGN (178 aa). 3'-phosphoadenylyl sulfate-binding positions include 434-437, Arg451, 477-478, and Lys515; these read ETVR and IA.

It in the N-terminal section; belongs to the sulfate adenylyltransferase family. This sequence in the C-terminal section; belongs to the APS kinase family. In terms of assembly, homohexamer. Dimer of trimers.

The protein localises to the cytoplasm. It catalyses the reaction sulfate + ATP + H(+) = adenosine 5'-phosphosulfate + diphosphate. The protein operates within sulfur metabolism; hydrogen sulfide biosynthesis; sulfite from sulfate: step 1/3. Its activity is regulated as follows. Allosterically inhibited by 3'-phosphoadenosine 5'-phosphosulfate (PAPS). In terms of biological role, catalyzes the first intracellular reaction of sulfate assimilation, forming adenosine-5'-phosphosulfate (APS) from inorganic sulfate and ATP. Plays an important role in sulfate activation as a component of the biosynthesis pathway of sulfur-containing amino acids. This Yarrowia lipolytica (strain CLIB 122 / E 150) (Yeast) protein is Sulfate adenylyltransferase.